The sequence spans 274 residues: Large ribosomal subunit protein uL2 (274 aa).

A disordered region spans residues 225–274 (MNPVDHPHGGGEGRSPIGRHPVTPWGKPTLGVKTRKKNKASSKLIIKRRK). Basic residues predominate over residues 257–274 (KTRKKNKASSKLIIKRRK).

The protein belongs to the universal ribosomal protein uL2 family. As to quaternary structure, part of the 50S ribosomal subunit. Forms a bridge to the 30S subunit in the 70S ribosome.

Its function is as follows. One of the primary rRNA binding proteins. Required for association of the 30S and 50S subunits to form the 70S ribosome, for tRNA binding and peptide bond formation. It has been suggested to have peptidyltransferase activity; this is somewhat controversial. Makes several contacts with the 16S rRNA in the 70S ribosome. This is Large ribosomal subunit protein uL2 from Carboxydothermus hydrogenoformans (strain ATCC BAA-161 / DSM 6008 / Z-2901).